Here is a 473-residue protein sequence, read N- to C-terminus: Cysteine--tRNA ligase (473 aa).

A Zn(2+)-binding site is contributed by cysteine 27. The 'HIGH' region signature appears at 29–39; sequence ITPYDHVHVGH. 3 residues coordinate Zn(2+): cysteine 213, histidine 238, and glutamate 242. The 'KMSKS' region signature appears at 271–275; it reads KMSKS. An ATP-binding site is contributed by lysine 274.

This sequence belongs to the class-I aminoacyl-tRNA synthetase family. Zn(2+) is required as a cofactor.

It localises to the cytoplasm. It carries out the reaction tRNA(Cys) + L-cysteine + ATP = L-cysteinyl-tRNA(Cys) + AMP + diphosphate. The polypeptide is Cysteine--tRNA ligase (Pyrobaculum calidifontis (strain DSM 21063 / JCM 11548 / VA1)).